The sequence spans 364 residues: tRNA 2-selenouridine synthase (364 aa).

The region spanning 14–137 (LIADTPIIDV…LRQTAIQATI (124 aa)) is the Rhodanese domain. Cys-97 (S-selanylcysteine intermediate) is an active-site residue.

It belongs to the SelU family. As to quaternary structure, monomer.

It catalyses the reaction 5-methylaminomethyl-2-thiouridine(34) in tRNA + selenophosphate + (2E)-geranyl diphosphate + H2O + H(+) = 5-methylaminomethyl-2-selenouridine(34) in tRNA + (2E)-thiogeraniol + phosphate + diphosphate. The enzyme catalyses 5-methylaminomethyl-2-thiouridine(34) in tRNA + (2E)-geranyl diphosphate = 5-methylaminomethyl-S-(2E)-geranyl-thiouridine(34) in tRNA + diphosphate. The catalysed reaction is 5-methylaminomethyl-S-(2E)-geranyl-thiouridine(34) in tRNA + selenophosphate + H(+) = 5-methylaminomethyl-2-(Se-phospho)selenouridine(34) in tRNA + (2E)-thiogeraniol. It carries out the reaction 5-methylaminomethyl-2-(Se-phospho)selenouridine(34) in tRNA + H2O = 5-methylaminomethyl-2-selenouridine(34) in tRNA + phosphate. Involved in the post-transcriptional modification of the uridine at the wobble position (U34) of tRNA(Lys), tRNA(Glu) and tRNA(Gln). Catalyzes the conversion of 2-thiouridine (S2U-RNA) to 2-selenouridine (Se2U-RNA). Acts in a two-step process involving geranylation of 2-thiouridine (S2U) to S-geranyl-2-thiouridine (geS2U) and subsequent selenation of the latter derivative to 2-selenouridine (Se2U) in the tRNA chain. In Escherichia coli O127:H6 (strain E2348/69 / EPEC), this protein is tRNA 2-selenouridine synthase.